Consider the following 330-residue polypeptide: Alpha/beta hydrolase domain-containing protein VTE7 (330 aa).

The AB hydrolase-1 domain occupies 84 to 315 (VVLLHCFDSS…GHLPHVENPK (232 aa)). Serine 157 serves as the catalytic Nucleophile. Residues aspartate 279 and histidine 307 each act as charge relay system in the active site.

It belongs to the AB hydrolase superfamily.

Its subcellular location is the plastid. The protein resides in the chloroplast envelope. Hydrolase involved in tocopherol (vitamin E) biosynthesis. Releases prenyl alcohols from chlorophyll biosynthetic intermediates, which are then converted to the corresponding diphosphates for tocopherol biosynthesis. Provides most of the phytol from chlorophyll for tocopherol biosynthesis in seeds. The polypeptide is Alpha/beta hydrolase domain-containing protein VTE7 (Arabidopsis thaliana (Mouse-ear cress)).